Reading from the N-terminus, the 179-residue chain is MKGGKRIQSTRQNRINSEIRAHEVRLTGLDGEQIGVVSLKEALEKAEEAGADLVEISPNAEPPVCRIMDYGKFLYEKSKTLKEQKKEQKVIQVKEVKFRPGTDEGDYQVKLRNLIRFLEDGDKAKVTLRFRGREMAHQQIGMEVLNRIRQDLDELATVESFPNKIEGRQMIMVLAPKKK.

The protein belongs to the IF-3 family. In terms of assembly, monomer.

Its subcellular location is the cytoplasm. In terms of biological role, IF-3 binds to the 30S ribosomal subunit and shifts the equilibrium between 70S ribosomes and their 50S and 30S subunits in favor of the free subunits, thus enhancing the availability of 30S subunits on which protein synthesis initiation begins. This chain is Translation initiation factor IF-3, found in Proteus hauseri.